Here is a 158-residue protein sequence, read N- to C-terminus: Fibroblast growth factor 2 (158 aa).

The propeptide occupies 1-12; the sequence is MAAGAAGSITTL. A heparin-binding site is contributed by N39. The interval 131–147 is heparin-binding; that stretch reads KRTGQYKPGPKTGPGQK.

This sequence belongs to the heparin-binding growth factors family.

It localises to the secreted. It is found in the nucleus. Acts as a ligand for FGFR1, FGFR2, FGFR3 and FGFR4. Also acts as an integrin ligand which is required for FGF2 signaling. Plays an important role in the regulation of cell survival, cell division, cell differentiation and cell migration. Functions as a potent mitogen in vitro. Can induce angiogenesis. The protein is Fibroblast growth factor 2 (FGF2) of Gallus gallus (Chicken).